The chain runs to 104 residues: Ycf49-like protein (104 aa).

Transmembrane regions (helical) follow at residues 6–26 (IPTWMVHVSSVIEWIVAIALV), 41–61 (LAWGMVPALVSATCACTWHFF), and 73–93 (LQALTTVIGNITLCLAAWWIY).

It belongs to the ycf49 family.

It is found in the cell membrane. This chain is Ycf49-like protein, found in Synechocystis sp. (strain ATCC 27184 / PCC 6803 / Kazusa).